A 149-amino-acid chain; its full sequence is D-aminoacyl-tRNA deacylase (149 aa).

The Gly-cisPro motif, important for rejection of L-amino acids signature appears at 137–138 (GP).

Belongs to the DTD family. Homodimer.

It localises to the cytoplasm. The catalysed reaction is glycyl-tRNA(Ala) + H2O = tRNA(Ala) + glycine + H(+). It catalyses the reaction a D-aminoacyl-tRNA + H2O = a tRNA + a D-alpha-amino acid + H(+). Functionally, an aminoacyl-tRNA editing enzyme that deacylates mischarged D-aminoacyl-tRNAs. Also deacylates mischarged glycyl-tRNA(Ala), protecting cells against glycine mischarging by AlaRS. Acts via tRNA-based rather than protein-based catalysis; rejects L-amino acids rather than detecting D-amino acids in the active site. By recycling D-aminoacyl-tRNA to D-amino acids and free tRNA molecules, this enzyme counteracts the toxicity associated with the formation of D-aminoacyl-tRNA entities in vivo and helps enforce protein L-homochirality. The protein is D-aminoacyl-tRNA deacylase of Thermoanaerobacter sp. (strain X514).